We begin with the raw amino-acid sequence, 380 residues long: Alpha-N-acetylneuraminate alpha-2,8-sialyltransferase ST8SIA3 (380 aa).

The Cytoplasmic segment spans residues Met1–Met17. The chain crosses the membrane as a helical; Signal-anchor for type II membrane protein span at residues Leu18–Leu33. Topologically, residues Lys34–Ala380 are lumenal. N-linked (GlcNAc...) asparagine glycans are attached at residues Asn93 and Asn113. 2 disulfides stabilise this stretch: Cys162–Cys313 and Cys176–Cys379. Residues Asn167 and Asn190 each contribute to the CMP-N-acetyl-beta-neuraminate site. N-linked (GlcNAc...) asparagine glycosylation occurs at Asn206. 6 residues coordinate CMP-N-acetyl-beta-neuraminate: Ser300, Thr301, Gly302, Trp322, Tyr336, and His337. His354 (proton donor/acceptor) is an active-site residue.

This sequence belongs to the glycosyltransferase 29 family. As to quaternary structure, homodimer. Expressed in neurons in brain with higher expression in the striatum than in the hippocampus, cortex, and cerebellum (at protein level). Expressed in testes.

The protein resides in the golgi apparatus membrane. It catalyses the reaction a ganglioside GM3 (d18:1(4E)) + CMP-N-acetyl-beta-neuraminate = a ganglioside GD3 (d18:1(4E)) + CMP + H(+). The enzyme catalyses a ganglioside GM3 + CMP-N-acetyl-beta-neuraminate = a ganglioside GD3 + CMP + H(+). It carries out the reaction an N-acetyl-alpha-neuraminyl-(2-&gt;3)-beta-D-galactosyl derivative + CMP-N-acetyl-beta-neuraminate = an N-acetyl-alpha-neuraminyl-(2-&gt;8)-N-acetyl-alpha-neuraminyl-(2-&gt;3)-beta-D-galactosyl derivative + CMP + H(+). The catalysed reaction is an N-acetyl-alpha-neuraminyl-(2-&gt;3)-beta-D-galactosyl-(1-&gt;4)-N-acetyl-beta-D-glucosaminyl derivative + CMP-N-acetyl-beta-neuraminate = an alpha-Neu5Ac-(2-&gt;8)-alpha-Neu5Ac-(2-&gt;3)-beta-D-Gal-(1-&gt;4)-beta-D-GlcNAc derivative + CMP + H(+). Its pathway is protein modification; protein glycosylation. In terms of biological role, catalyzes the transfer of sialic acid from a CMP-linked sialic acid donor onto a terminal alpha-2,3-, alpha-2,6-, or alpha-2,8-linked sialic acid of an acceptor, such as N-linked oligosaccharides of glycoproteins and glycolipids through alpha-2,8-linkages. Forms oligosialic and polysialic acid on various sialylated N-acetyllactosamine oligosaccharides of glycoproteins, including FETUB N-glycans, a2-HS-glycoprotein (AHSG) and alpha 2,3-sialylated glycosphingolipids, such as alpha 2,3-sialylparagloboside and ganglioside GM3 and to a lesser extent NCAM1 N-glycans. However, it is much more specific to N-linked oligosaccharides of glycoproteins than glycosphingolipids. 2,3-sialylparagloboside served as the best acceptor substrate among the glycolipids. alpha-Neu5Ac-(2-&gt;8)-alpha-Neu5Ac-(2-&gt;3)-beta-D-Gal-(1-&gt;4)-6S-D-GlcNAc and monosialyl and disialyl N-acetyllactosamines are the best acceptor substrates among glycoproteins. May play critical role in the striatum by mediating the formation of disialylated and trisialylated terminal glycotopes on N- and O-glycans of specific striatal proteins, regulating their distribution in lipid rafts, affecting their interaction with other binding partners, and subsequently modulating striatal functions. The protein is Alpha-N-acetylneuraminate alpha-2,8-sialyltransferase ST8SIA3 of Mus musculus (Mouse).